Reading from the N-terminus, the 222-residue chain is Protein-L-isoaspartate O-methyltransferase (222 aa).

Residue serine 73 is part of the active site.

It belongs to the methyltransferase superfamily. L-isoaspartyl/D-aspartyl protein methyltransferase family.

It is found in the cytoplasm. The catalysed reaction is [protein]-L-isoaspartate + S-adenosyl-L-methionine = [protein]-L-isoaspartate alpha-methyl ester + S-adenosyl-L-homocysteine. Its function is as follows. Catalyzes the methyl esterification of L-isoaspartyl residues in peptides and proteins that result from spontaneous decomposition of normal L-aspartyl and L-asparaginyl residues. It plays a role in the repair and/or degradation of damaged proteins. The polypeptide is Protein-L-isoaspartate O-methyltransferase (Chromobacterium violaceum (strain ATCC 12472 / DSM 30191 / JCM 1249 / CCUG 213 / NBRC 12614 / NCIMB 9131 / NCTC 9757 / MK)).